Reading from the N-terminus, the 1099-residue chain is ATP-dependent helicase/deoxyribonuclease subunit B (1099 aa).

[4Fe-4S] cluster is bound by residues Cys-766, Cys-1056, Cys-1059, and Cys-1065.

Belongs to the helicase family. AddB/RexB type 2 subfamily. As to quaternary structure, heterodimer of AddA and RexB. Mg(2+) is required as a cofactor. The cofactor is [4Fe-4S] cluster.

In terms of biological role, the heterodimer acts as both an ATP-dependent DNA helicase and an ATP-dependent, dual-direction single-stranded exonuclease. Recognizes the chi site generating a DNA molecule suitable for the initiation of homologous recombination. This subunit has 5' -&gt; 3' nuclease activity but not helicase activity. This is ATP-dependent helicase/deoxyribonuclease subunit B from Lactococcus lactis subsp. cremoris (strain SK11).